A 332-amino-acid chain; its full sequence is MLFLQFLFLDVVLGGSITKNVVQENISFYLMQISSYANQSWVQNCGSGWLGELQTHGWDSESGTIIFLHTWSRGNFSNEELEDIPLLFHVYFSGLSLEVQDRVSQLQIKYPFDIQARAGCELHSGEPPKGFLYGALNGLNFLSYQNKSWVPSPEGGNRAQKVCDLLNTYEGIKETAYHLIRDTCPRFLLGLLDAGKMDLQRQVRPEVWLSSSPNLKPGRLLLACHVSGFYPKPIWVMWMRGAQEQLETKQGDILPHADGTWYLRVTLDVAAKEAAGLSCRVRHSSLRDQDIILYWGHGLSVILITFAVIVPLVLLIILVLLCKKCCTYQGIP.

Residues 1 to 17 form the signal peptide; sequence MLFLQFLFLDVVLGGSI. Residues 18–300 lie on the Extracellular side of the membrane; that stretch reads TKNVVQENIS…IILYWGHGLS (283 aa). 4 N-linked (GlcNAc...) asparagine glycosylation sites follow: Asn-25, Asn-38, Asn-75, and Asn-146. 2 disulfides stabilise this stretch: Cys-120–Cys-184 and Cys-224–Cys-279. An Ig-like domain is found at 205 to 292; it reads PEVWLSSSPN…HSSLRDQDII (88 aa). A helical transmembrane segment spans residues 301-321; that stretch reads VILITFAVIVPLVLLIILVLL. At 322–332 the chain is on the cytoplasmic side; sequence CKKCCTYQGIP.

As to quaternary structure, heterodimer with B2M (beta-2-microglobulin).

It localises to the cell membrane. The protein localises to the endosome membrane. Antigen-presenting protein that binds self and non-self lipid and glycolipid antigens and presents them to T-cell receptors on natural killer T-cells. This Cavia porcellus (Guinea pig) protein is T-cell surface glycoprotein CD1c3 (CD1C3).